Here is a 48-residue protein sequence, read N- to C-terminus: Fimbrial assembly protein, serogroup E2 (48 aa).

The polypeptide is Fimbrial assembly protein, serogroup E2 (fimB) (Dichelobacter nodosus (Bacteroides nodosus)).